An 87-amino-acid chain; its full sequence is Exodeoxyribonuclease 7 small subunit (87 aa).

It belongs to the XseB family. As to quaternary structure, heterooligomer composed of large and small subunits.

The protein localises to the cytoplasm. The enzyme catalyses Exonucleolytic cleavage in either 5'- to 3'- or 3'- to 5'-direction to yield nucleoside 5'-phosphates.. Its function is as follows. Bidirectionally degrades single-stranded DNA into large acid-insoluble oligonucleotides, which are then degraded further into small acid-soluble oligonucleotides. This is Exodeoxyribonuclease 7 small subunit from Serratia proteamaculans (strain 568).